The following is a 187-amino-acid chain: Ribosome-recycling factor (187 aa).

It belongs to the RRF family.

It is found in the cytoplasm. In terms of biological role, responsible for the release of ribosomes from messenger RNA at the termination of protein biosynthesis. May increase the efficiency of translation by recycling ribosomes from one round of translation to another. The sequence is that of Ribosome-recycling factor from Ruegeria sp. (strain TM1040) (Silicibacter sp.).